Consider the following 491-residue polypeptide: UDP-N-acetylmuramate--L-alanine ligase (491 aa).

An ATP-binding site is contributed by 126-132; sequence GTHGKTT.

This sequence belongs to the MurCDEF family.

The protein resides in the cytoplasm. The catalysed reaction is UDP-N-acetyl-alpha-D-muramate + L-alanine + ATP = UDP-N-acetyl-alpha-D-muramoyl-L-alanine + ADP + phosphate + H(+). The protein operates within cell wall biogenesis; peptidoglycan biosynthesis. Its function is as follows. Cell wall formation. The chain is UDP-N-acetylmuramate--L-alanine ligase from Salmonella typhimurium (strain LT2 / SGSC1412 / ATCC 700720).